The primary structure comprises 386 residues: Bifunctional enzyme IspD/IspF (386 aa).

Positions 1–230 (MIRDERVAAI…RARSILEAPV (230 aa)) are 2-C-methyl-D-erythritol 4-phosphate cytidylyltransferase. Positions 231-386 (AMGVGYDTHR…HAVALLVRVR (156 aa)) are 2-C-methyl-D-erythritol 2,4-cyclodiphosphate synthase. The a divalent metal cation site is built by Asp-237 and His-239. Residues 237–239 (DTH) and 262–263 (HS) contribute to the 4-CDP-2-C-methyl-D-erythritol 2-phosphate site. A divalent metal cation is bound at residue His-270. 4-CDP-2-C-methyl-D-erythritol 2-phosphate is bound by residues 284 to 286 (DLG), 289 to 293 (FPDTD), 360 to 363 (TTGE), Phe-367, and Arg-370.

The protein in the N-terminal section; belongs to the IspD/TarI cytidylyltransferase family. IspD subfamily. In the C-terminal section; belongs to the IspF family. It depends on a divalent metal cation as a cofactor.

The catalysed reaction is 2-C-methyl-D-erythritol 4-phosphate + CTP + H(+) = 4-CDP-2-C-methyl-D-erythritol + diphosphate. It catalyses the reaction 4-CDP-2-C-methyl-D-erythritol 2-phosphate = 2-C-methyl-D-erythritol 2,4-cyclic diphosphate + CMP. It functions in the pathway isoprenoid biosynthesis; isopentenyl diphosphate biosynthesis via DXP pathway; isopentenyl diphosphate from 1-deoxy-D-xylulose 5-phosphate: step 2/6. Its pathway is isoprenoid biosynthesis; isopentenyl diphosphate biosynthesis via DXP pathway; isopentenyl diphosphate from 1-deoxy-D-xylulose 5-phosphate: step 4/6. Functionally, bifunctional enzyme that catalyzes the formation of 4-diphosphocytidyl-2-C-methyl-D-erythritol from CTP and 2-C-methyl-D-erythritol 4-phosphate (MEP) (IspD), and catalyzes the conversion of 4-diphosphocytidyl-2-C-methyl-D-erythritol 2-phosphate (CDP-ME2P) to 2-C-methyl-D-erythritol 2,4-cyclodiphosphate (ME-CPP) with a corresponding release of cytidine 5-monophosphate (CMP) (IspF). This chain is Bifunctional enzyme IspD/IspF, found in Anaeromyxobacter sp. (strain Fw109-5).